The primary structure comprises 304 residues: Prephenate dehydratase (304 aa).

A Prephenate dehydratase domain is found at 3–178 (RIAYFGPVGT…ARTRFLLMRR (176 aa)). Residues 193–271 (SIVAAAANRT…DVRFLGSFAR (79 aa)) enclose the ACT domain.

It catalyses the reaction prephenate + H(+) = 3-phenylpyruvate + CO2 + H2O. It functions in the pathway amino-acid biosynthesis; L-phenylalanine biosynthesis; phenylpyruvate from prephenate: step 1/1. The sequence is that of Prephenate dehydratase (pheA) from Amycolatopsis methanolica.